We begin with the raw amino-acid sequence, 232 residues long: Megakaryocyte and platelet inhibitory receptor G6b (232 aa).

Residues 1–17 (MALVLQLLPLLLSKVQG) form the signal peptide. The Extracellular portion of the chain corresponds to 18-140 (NPEVSLEGNP…GSTHGSEYSK (123 aa)). 2 N-linked (GlcNAc...) asparagine glycosylation sites follow: N32 and N112. Residues 141 to 161 (VLIPLLGFGLVLGLGALGLVW) traverse the membrane as a helical segment. At 162-232 (WRRSCVPPSH…DASTVYAVVV (71 aa)) the chain is on the cytoplasmic side. 2 consecutive short sequence motifs (ITIM motif) follow at residues 200-205 (LHYADL) and 226-231 (TVYAVV). At Y202 the chain carries Phosphotyrosine.

In terms of assembly, interacts (via ITIM motif) with PTPN6 and PTPN11. Binds to heparin. N-glycosylated. In terms of processing, may be O-glycosylated. Post-translationally, phosphorylated.

It localises to the cell membrane. Its function is as follows. Inhibitory receptor that acts as a critical regulator of hematopoietic lineage differentiation, megakaryocyte function and platelet production. Inhibits platelet aggregation and activation by agonists such as ADP and collagen-related peptide. This regulation of megakaryocate function as well as platelet production ann activation is done through the inhibition (via the 2 ITIM motifs) of the receptors CLEC1B and GP6:FcRgamma signaling. Appears to operate in a calcium-independent manner. This chain is Megakaryocyte and platelet inhibitory receptor G6b, found in Rattus norvegicus (Rat).